We begin with the raw amino-acid sequence, 206 residues long: Ribonuclease HII (206 aa).

Residues 14–206 form the RNase H type-2 domain; that stretch reads EFICGIDEVG…FKLRQLGEKV (193 aa). A divalent metal cation is bound by residues Asp-20, Glu-21, and Asp-117.

This sequence belongs to the RNase HII family. Mn(2+) is required as a cofactor. The cofactor is Mg(2+).

The protein resides in the cytoplasm. It carries out the reaction Endonucleolytic cleavage to 5'-phosphomonoester.. Endonuclease that specifically degrades the RNA of RNA-DNA hybrids. This chain is Ribonuclease HII, found in Chlorobium chlorochromatii (strain CaD3).